The chain runs to 607 residues: Nexilin (607 aa).

A compositionally biased stretch (basic and acidic residues) spans 1-14 (MNDVSQKAEIKEML). Disordered regions lie at residues 1 to 143 (MNDV…EDKM) and 165 to 268 (ETEA…RRRI). Serine 16 is subject to Phosphoserine. Basic and acidic residues-rich tracts occupy residues 40–85 (GKFD…RAEQ), 120–143 (KTKD…EDKM), 167–221 (EAKK…HMVN), and 228–268 (DRET…RRRI). Serine 172 carries the phosphoserine modification. A phosphoserine mark is found at serine 281, serine 288, and serine 296. Threonine 301 carries the post-translational modification Phosphothreonine. Disordered stretches follow at residues 419–444 (NFHE…KVNM) and 480–514 (AALQ…GAPW). 2 positions are modified to phosphoserine: serine 495 and serine 500. At threonine 502 the chain carries Phosphothreonine. An Ig-like domain is found at 513–601 (PWFKKPLRNT…GSAASTCILT (89 aa)).

Interacts with F-actin.

The protein resides in the cytoplasm. It localises to the cytoskeleton. Its subcellular location is the cell junction. It is found in the adherens junction. The protein localises to the myofibril. The protein resides in the sarcomere. It localises to the z line. Functionally, involved in regulating cell migration through association with the actin cytoskeleton. Has an essential role in the maintenance of Z line and sarcomere integrity. This Mus musculus (Mouse) protein is Nexilin.